Reading from the N-terminus, the 228-residue chain is Pyridoxamine 5'-phosphate oxidase (228 aa).

20 to 23 (QYDK) lines the pyridoxal 5'-phosphate pocket. Residue K29 forms a Glycyl lysine isopeptide (Lys-Gly) (interchain with G-Cter in ubiquitin) linkage. Position 73–76 (73–76 (RILL)) interacts with FMN. K78 is a binding site for pyridoxal 5'-phosphate. FMN-binding positions include 88–89 (YS), 95–96 (RK), and Q118. Residues Y136, R140, and S144 each coordinate pyridoxal 5'-phosphate. FMN is bound by residues 153 to 154 (QS) and W199. 205-207 (RLH) is a binding site for pyridoxal 5'-phosphate. R209 is a binding site for FMN.

The protein belongs to the pyridoxamine 5'-phosphate oxidase family. Homodimer. The cofactor is FMN.

The protein localises to the mitochondrion intermembrane space. It carries out the reaction pyridoxamine 5'-phosphate + O2 + H2O = pyridoxal 5'-phosphate + H2O2 + NH4(+). The enzyme catalyses pyridoxine 5'-phosphate + O2 = pyridoxal 5'-phosphate + H2O2. It functions in the pathway cofactor metabolism; pyridoxal 5'-phosphate salvage; pyridoxal 5'-phosphate from pyridoxamine 5'-phosphate: step 1/1. Its pathway is cofactor metabolism; pyridoxal 5'-phosphate salvage; pyridoxal 5'-phosphate from pyridoxine 5'-phosphate: step 1/1. Catalyzes the oxidation of either pyridoxine 5'-phosphate (PNP) or pyridoxamine 5'-phosphate (PMP) into pyridoxal 5'-phosphate (PLP). The protein is Pyridoxamine 5'-phosphate oxidase (PDX3) of Saccharomyces cerevisiae (strain ATCC 204508 / S288c) (Baker's yeast).